The following is a 443-amino-acid chain: DNA double-strand break repair protein Mre11 (443 aa).

4 residues coordinate Mn(2+): Asp8, His10, Asp49, and Asn84. His85 serves as the catalytic Proton donor. His169, His201, and His203 together coordinate Mn(2+). The tract at residues 382 to 429 is disordered; it reads QEEGAEERVVEEETEKKVEEQFKGDEEADEAERRAEETEKAKSTKKAR. Positions 395 to 423 are enriched in basic and acidic residues; sequence TEKKVEEQFKGDEEADEAERRAEETEKAK.

Belongs to the MRE11/RAD32 family. As to quaternary structure, homodimer. Forms a heterotetramer composed of two Mre11 subunits and two Rad50 subunits. Requires Mn(2+) as cofactor.

With respect to regulation, nuclease activity is regulated by Rad50. Part of the Rad50/Mre11 complex, which is involved in the early steps of DNA double-strand break (DSB) repair. The complex may facilitate opening of the processed DNA ends to aid in the recruitment of HerA and NurA. Mre11 binds to DSB ends and has both double-stranded 3'-5' exonuclease activity and single-stranded endonuclease activity. This Archaeoglobus fulgidus (strain ATCC 49558 / DSM 4304 / JCM 9628 / NBRC 100126 / VC-16) protein is DNA double-strand break repair protein Mre11.